The chain runs to 284 residues: Efem/EfeO family lipoprotein (284 aa).

Residues 1-17 (MKKLTTLLLASTLLIAA) form the signal peptide. Cys18 carries the N-palmitoyl cysteine lipid modification. Cys18 is lipidated: S-diacylglycerol cysteine.

The protein belongs to the EfeM/EfeO family.

It localises to the cell membrane. This is Efem/EfeO family lipoprotein from Staphylococcus aureus (strain MSSA476).